A 60-amino-acid polypeptide reads, in one-letter code: Protein translocase subunit SecE (60 aa).

Residues 1 to 31 are Cytoplasmic-facing; it reads MFARLIRYFQEARAELARVTWPTREQVVEGT. The chain crosses the membrane as a helical span at residues 32–52; sequence QAILLFTLAFMVILGLYDTVF. Topologically, residues 53–60 are extracellular; the sequence is RFLIGLLR.

It belongs to the SecE/SEC61-gamma family. In terms of assembly, component of the Sec protein translocase complex. Heterotrimer consisting of SecY, SecE and SecG subunits. The heterotrimers can form oligomers, although 1 heterotrimer is thought to be able to translocate proteins. Interacts with SecDF, and other proteins may be involved. The channel interacts with SecA via subunit SecY.

The protein localises to the cell inner membrane. Its function is as follows. Essential subunit of the protein translocation channel SecYEG. Clamps together the 2 halves of SecY. May contact the channel plug during translocation. The chain is Protein translocase subunit SecE from Thermus thermophilus (strain ATCC 27634 / DSM 579 / HB8).